The sequence spans 330 residues: 4-hydroxythreonine-4-phosphate dehydrogenase (330 aa).

Substrate is bound by residues His136 and Thr137. A divalent metal cation is bound by residues His166, His211, and His266. Positions 274, 283, and 292 each coordinate substrate.

This sequence belongs to the PdxA family. As to quaternary structure, homodimer. It depends on Zn(2+) as a cofactor. The cofactor is Mg(2+). Co(2+) serves as cofactor.

It localises to the cytoplasm. It carries out the reaction 4-(phosphooxy)-L-threonine + NAD(+) = 3-amino-2-oxopropyl phosphate + CO2 + NADH. It functions in the pathway cofactor biosynthesis; pyridoxine 5'-phosphate biosynthesis; pyridoxine 5'-phosphate from D-erythrose 4-phosphate: step 4/5. In terms of biological role, catalyzes the NAD(P)-dependent oxidation of 4-(phosphooxy)-L-threonine (HTP) into 2-amino-3-oxo-4-(phosphooxy)butyric acid which spontaneously decarboxylates to form 3-amino-2-oxopropyl phosphate (AHAP). This chain is 4-hydroxythreonine-4-phosphate dehydrogenase, found in Serratia proteamaculans (strain 568).